The chain runs to 1189 residues: Pumilio homolog 1 (1189 aa).

Position 2 is an N-acetylserine (serine 2). Serine 19 bears the Phosphoserine mark. Positions 22–73 (LKHHPQEPANPNMPVVLTSGTGSQAQPQPAANQALAAGTHSSPVPGSIGVAG) are disordered. A compositionally biased stretch (low complexity) spans 45–58 (QAQPQPAANQALAA). Phosphoserine occurs at positions 75, 98, and 106. Threonine 112 carries the phosphothreonine modification. Phosphoserine occurs at positions 124, 159, 197, 209, and 229. A disordered region spans residues 233 to 272 (SCLRKGGFGPRDADSDENDKGEKKNKGTFDGDKLGDLKEE). Positions 250–272 (NDKGEKKNKGTFDGDKLGDLKEE) are enriched in basic and acidic residues. A Phosphoserine modification is found at serine 305. Positions 491-503 (QQSAPQAQQGQQQ) are enriched in low complexity. 2 disordered regions span residues 491-525 (QQSAPQAQQGQQQVLRGGASQRPLTPNQNQQGQQT) and 614-647 (AGTTNGPFRPLGTQQPQPQPQQQPSNNLASSSFY). The span at 512–525 (RPLTPNQNQQGQQT) shows a compositional bias: polar residues. Threonine 515 bears the Phosphothreonine mark. Residues 627-647 (QQPQPQPQQQPSNNLASSSFY) are compositionally biased toward low complexity. Residues serine 710 and serine 715 each carry the phosphoserine modification. Residues 743–773 (GPVGMPLPSQGPGHSQTPPPSLSSHGSSSSL) form a disordered region. The span at 764-773 (LSSHGSSSSL) shows a compositional bias: low complexity. Arginine 797 is subject to Omega-N-methylarginine. A phosphoserine mark is found at serine 807 and serine 823. Residues 829–1171 (GRSRLLEDFR…HILAKLEKYY (343 aa)) form the PUM-HD domain. 8 Pumilio repeats span residues 849-884 (EIAGHIMEFSQDQHGSRFIQLKLERATAAERQLVFN), 885-920 (EILQAAYQLMVDVFGNYVIQKFFEFGSHEQKLALAE), 921-958 (RIRGHVLSLALQMYGCRVIQKALEFIPSDQQVINEMVR), 959-994 (ELDGHVLKCVKDQNGNHVVQKCIECVQPQSLQFIID), 995-1030 (AFKGQVFALSTHPYGCRVIQRILEHCLPDQTLPILE), 1031-1066 (ELHQHTEQLVQDQYGNYVIQHVLEHGRPEDKSKIVA), 1067-1102 (EIRGNVLVLSQHKFASNVVEKCVTHASRTERAVLID), and 1106-1145 (TMNDGPHSALYTMMKDQYANYVVQKMIDVAEPGQRKIVMH). The segment at 864–868 (SRFIQ) is adenine-nucleotide binding in RNA target. A uracil-nucleotide binding in RNA target region spans residues 900–904 (NYVIQ). The tract at residues 936–940 (CRVIQ) is adenine-nucleotide binding in RNA target. The tract at residues 974–978 (NHVVQ) is non-specific-nucleotide binding in RNA target. Residues 1010–1014 (CRVIQ) are adenine-nucleotide binding in RNA target. The tract at residues 1046–1050 (NYVIQ) is uracil-nucleotide binding in RNA target. Guanine-nucleotide binding in RNA target regions lie at residues 1082–1086 (SNVVE) and 1083–1086 (NVVE). The tract at residues 1125 to 1129 (NYVVQ) is uracil-nucleotide binding in RNA target.

Recruits the CCR4-POP2-NOT deadenylase leading to translational inhibition and mRNA degradation. Interacts with TRIM71 (via NHL repeats) in an RNA-dependent manner. In terms of processing, phosphorylation at Ser-715 promotes RNA-binding activity. Following growth factor stimulation phosphorylated at Ser-715, promoting binding to the 3'-UTR of CDKN1B/p27 mRNA. As to expression, widely expressed. Expressed in brain, heart, kidney, liver, lung, skin, intestine, spleen, testis and thymus. Weakly or not expressed in muscles and stomach. Expressed at various stages of myeloid and lymphoid cell development. Highly expressed in testis. Expressed in all major brain regions (at protein level).

The protein localises to the cytoplasm. It is found in the P-body. The protein resides in the cytoplasmic granule. Sequence-specific RNA-binding protein that acts as a post-transcriptional repressor by binding the 3'-UTR of mRNA targets. Binds to an RNA consensus sequence, the Pumilio Response Element (PRE), 5'-UGUANAUA-3', that is related to the Nanos Response Element (NRE). Mediates post-transcriptional repression of transcripts via different mechanisms: acts via direct recruitment of the CCR4-POP2-NOT deadenylase leading to translational inhibition and mRNA degradation. Also mediates deadenylation-independent repression by promoting accessibility of miRNAs. Following growth factor stimulation, phosphorylated and binds to the 3'-UTR of CDKN1B/p27 mRNA, inducing a local conformational change that exposes miRNA-binding sites, promoting association of miR-221 and miR-222, efficient suppression of CDKN1B/p27 expression, and rapid entry to the cell cycle. Acts as a post-transcriptional repressor of E2F3 mRNAs by binding to its 3'-UTR and facilitating miRNA regulation. Represses a program of genes necessary to maintain genomic stability such as key mitotic, DNA repair and DNA replication factors. Its ability to repress those target mRNAs is regulated by the lncRNA NORAD (non-coding RNA activated by DNA damage) which, due to its high abundance and multitude of PUMILIO binding sites, is able to sequester a significant fraction of PUM1 and PUM2 in the cytoplasm. Involved in neuronal functions by regulating ATXN1 mRNA levels: acts by binding to the 3'-UTR of ATXN1 transcripts, leading to their down-regulation independently of the miRNA machinery. In testis, acts as a post-transcriptional regulator of spermatogenesis by binding to the 3'-UTR of mRNAs coding for regulators of p53/TP53. Involved in embryonic stem cell renewal by facilitating the exit from the ground state: acts by targeting mRNAs coding for naive pluripotency transcription factors and accelerates their down-regulation at the onset of differentiation. Binds specifically to miRNA MIR199A precursor, with PUM2, regulates miRNA MIR199A expression at a postranscriptional level. The polypeptide is Pumilio homolog 1 (Mus musculus (Mouse)).